Reading from the N-terminus, the 88-residue chain is Otospiralin (88 aa).

The N-terminal stretch at 1–21 (MQACMVPGLALCLLLGSLTEA) is a signal peptide.

Belongs to the otospiralin family. As to expression, ear specific.

The protein localises to the secreted. In terms of biological role, may be essential for the survival of the neurosensory epithelium of the inner ear. This is Otospiralin (OTOS) from Cavia porcellus (Guinea pig).